Here is a 293-residue protein sequence, read N- to C-terminus: C-type lectin domain family 4 member G (293 aa).

Residues 1-31 (MDTTRYSKWGGSSEEVPGGPWGRWVHWSRRP) are Cytoplasmic-facing. Ser-12 carries the phosphoserine modification. The chain crosses the membrane as a helical; Signal-anchor for type II membrane protein span at residues 32-52 (LFLALAVLVTTVLWAVILSIL). The Extracellular segment spans residues 53 to 293 (LSKASTERAA…GWICEKRHNC (241 aa)). An N-linked (GlcNAc...) asparagine glycan is attached at Asn-73. A coiled-coil region spans residues 96 to 136 (SGTQAQLQTTRAELGEAQAKLMEQESALRELRERVTQGLAE). N-linked (GlcNAc...) asparagine glycosylation occurs at Asn-159. The region spanning 172–287 (FEGSCYFFSV…CDSEKDGWIC (116 aa)) is the C-type lectin domain. An intrachain disulfide couples Cys-264 to Cys-278.

(Microbial infection) Interacts with Japanese encephalitis virus envelope protein E. As to quaternary structure, (Microbial infection) Interacts with ebolavirus glycoprotein. In terms of assembly, (Microbial infection) Interacts with SARS-CoV spike glycoprotein. (Microbial infection) Interacts with lassa virus and Lymphocytic choriomeningitis virus glycoprotein. As to expression, expressed exclusively in fetal and adult liver and in lymph nodes. Specifically expressed by endothelial cells lining lymph node and liver sinuses (at protein level).

It is found in the cell membrane. Its function is as follows. Binds mannose, N-acetylglucosamine (GlcNAc) and fucose, but not galactose, in a Ca(2+)-dependent manner, in vitro. In terms of biological role, (Microbial infection) Acts as a receptor for Japanese encephalitis virus. Functionally, (Microbial infection) Acts as a receptor for Ebolavirus. (Microbial infection) Acts as a receptor for SARS-CoV. Its function is as follows. (Microbial infection) Acts as a receptor for Lassa virus and Lymphocytic choriomeningitis virus glycoprotein. This chain is C-type lectin domain family 4 member G (CLEC4G), found in Homo sapiens (Human).